The chain runs to 288 residues: MLLGAIEAGGTKFVCATGAENGQVSDRISIPTTTPVETMTAVDDYFTTHPVDAIGIGSFGPIGVNPHDPKYGYITTTPKPGWGDFDFLGHLKSQFNIPLYWTTDVNEAAYGESMIGIAKDVPNSIYMTIGTGVGAGVISQNHIFNGRTHTELGHMRLNRLPGDDFKSNCPYHDICLEGLAAGPAVGKRTGKAGKDIPVDDPVWPIITDYIAQACVNLTVAFAPDKIILNGGVMNQRQLFPMIREKFAAYLNGYEEVPPLDDYIVPAGLGNNSGIAGGLLLAQAALKNA.

Threonine 131 is a binding site for ATP. Zn(2+)-binding residues include histidine 154, cysteine 169, histidine 172, and cysteine 175. ATP contacts are provided by residues proline 183 and 231-235 (GVMNQ).

This sequence belongs to the ROK (NagC/XylR) family. Requires Mg(2+) as cofactor.

It carries out the reaction D-fructose + ATP = D-fructose 6-phosphate + ADP + H(+). Inhibition by zinc ions. The protein is Fructokinase (scrK) of Pediococcus pentosaceus.